The chain runs to 507 residues: Fluoroacetaldehyde dehydrogenase (507 aa).

G219 to G225 contributes to the NAD(+) binding site. Residues E263 and C302 contribute to the active site.

It belongs to the aldehyde dehydrogenase family. Homotetramer.

The catalysed reaction is fluoroacetaldehyde + NAD(+) + H2O = fluoroacetate + NADH + 2 H(+). Functionally, catalyzes the oxidation of fluoroacetaldehyde to fluoroacetate. Has high affinity for fluoroacetate and glycolaldehyde but not for acetaldehyde. The chain is Fluoroacetaldehyde dehydrogenase from Streptantibioticus cattleyicolor (strain ATCC 35852 / DSM 46488 / JCM 4925 / NBRC 14057 / NRRL 8057) (Streptomyces cattleya).